The primary structure comprises 126 residues: Small ribosomal subunit protein bS6 (126 aa).

The interval 103 to 126 (LKAKDERKAPEALVEEVEAEDADE) is disordered. Acidic residues predominate over residues 115–126 (LVEEVEAEDADE).

It belongs to the bacterial ribosomal protein bS6 family.

Its function is as follows. Binds together with bS18 to 16S ribosomal RNA. The chain is Small ribosomal subunit protein bS6 from Glaesserella parasuis serovar 5 (strain SH0165) (Haemophilus parasuis).